The primary structure comprises 145 residues: Enhancer of mRNA-decapping protein 2 (145 aa).

Disordered stretches follow at residues Met-1–Thr-74 and Pro-89–Lys-115. The span at Thr-29–Pro-42 shows a compositional bias: polar residues. Basic and acidic residues predominate over residues Gln-55 to Ala-73. Basic residues predominate over residues Pro-89–Arg-102.

It belongs to the EDC family.

The protein localises to the cytoplasm. It is found in the nucleus. In terms of biological role, mRNA-binding protein which stimulates mRNA decapping by DCP1 and DCP2. In Saccharomyces cerevisiae (strain ATCC 204508 / S288c) (Baker's yeast), this protein is Enhancer of mRNA-decapping protein 2 (EDC2).